The sequence spans 168 residues: 6,7-dimethyl-8-ribityllumazine synthase (168 aa).

5-amino-6-(D-ribitylamino)uracil-binding positions include W31, 65-67, and 90-92; these read SFE and NVI. A (2S)-2-hydroxy-3-oxobutyl phosphate-binding site is contributed by 95–96; the sequence is ET. H98 functions as the Proton donor in the catalytic mechanism. A 5-amino-6-(D-ribitylamino)uracil-binding site is contributed by F123. R137 lines the (2S)-2-hydroxy-3-oxobutyl phosphate pocket.

This sequence belongs to the DMRL synthase family.

The enzyme catalyses (2S)-2-hydroxy-3-oxobutyl phosphate + 5-amino-6-(D-ribitylamino)uracil = 6,7-dimethyl-8-(1-D-ribityl)lumazine + phosphate + 2 H2O + H(+). The protein operates within cofactor biosynthesis; riboflavin biosynthesis; riboflavin from 2-hydroxy-3-oxobutyl phosphate and 5-amino-6-(D-ribitylamino)uracil: step 1/2. In terms of biological role, catalyzes the formation of 6,7-dimethyl-8-ribityllumazine by condensation of 5-amino-6-(D-ribitylamino)uracil with 3,4-dihydroxy-2-butanone 4-phosphate. This is the penultimate step in the biosynthesis of riboflavin. This is 6,7-dimethyl-8-ribityllumazine synthase from Christiangramia forsetii (strain DSM 17595 / CGMCC 1.15422 / KT0803) (Gramella forsetii).